Here is a 147-residue protein sequence, read N- to C-terminus: Heavy metal-dependent transcription regulator 1 (147 aa).

The region spanning 1 to 70 is the HTH merR-type domain; sequence MNIGQASKVV…VEQIKDLLAL (70 aa). A DNA-binding region (H-T-H motif) is located at residues 3-22; sequence IGQASKVVSGVSSKMIRYYE.

It localises to the cytoplasm. In terms of biological role, transcriptional regulator involved in acid tolerance. Binds copper. The sequence is that of Heavy metal-dependent transcription regulator 1 (hmrR1) from Rhizobium meliloti (strain 1021) (Ensifer meliloti).